Here is a 182-residue protein sequence, read N- to C-terminus: Probable inosine/xanthosine triphosphatase (182 aa).

Glu65 serves as a coordination point for Mg(2+). Position 65–66 (65–66 (EA)) interacts with substrate.

The protein belongs to the YjjX NTPase family. Homodimer. The cofactor is Mg(2+). It depends on Mn(2+) as a cofactor.

It carries out the reaction XTP + H2O = XDP + phosphate + H(+). It catalyses the reaction ITP + H2O = IDP + phosphate + H(+). Functionally, phosphatase that hydrolyzes non-canonical purine nucleotides such as XTP and ITP to their respective diphosphate derivatives. Probably excludes non-canonical purines from DNA/RNA precursor pool, thus preventing their incorporation into DNA/RNA and avoiding chromosomal lesions. The chain is Probable inosine/xanthosine triphosphatase from Pyrobaculum neutrophilum (strain DSM 2338 / JCM 9278 / NBRC 100436 / V24Sta) (Thermoproteus neutrophilus).